We begin with the raw amino-acid sequence, 84 residues long: Cell division topological specificity factor (84 aa).

Belongs to the MinE family.

Functionally, prevents the cell division inhibition by proteins MinC and MinD at internal division sites while permitting inhibition at polar sites. This ensures cell division at the proper site by restricting the formation of a division septum at the midpoint of the long axis of the cell. The chain is Cell division topological specificity factor from Ralstonia pickettii (strain 12J).